A 171-amino-acid polypeptide reads, in one-letter code: Shikimate kinase (171 aa).

14–19 (GAGKST) is an ATP binding site. Residue Ser18 participates in Mg(2+) binding. Residues Asp36, Arg60, and Gly82 each contribute to the substrate site. Arg120 is a binding site for ATP. Arg139 serves as a coordination point for substrate. Gln156 is an ATP binding site.

Belongs to the shikimate kinase family. As to quaternary structure, monomer. Mg(2+) serves as cofactor.

It localises to the cytoplasm. It catalyses the reaction shikimate + ATP = 3-phosphoshikimate + ADP + H(+). It participates in metabolic intermediate biosynthesis; chorismate biosynthesis; chorismate from D-erythrose 4-phosphate and phosphoenolpyruvate: step 5/7. Catalyzes the specific phosphorylation of the 3-hydroxyl group of shikimic acid using ATP as a cosubstrate. The sequence is that of Shikimate kinase from Shewanella sp. (strain ANA-3).